A 359-amino-acid chain; its full sequence is C-X-C chemokine receptor type 2 (359 aa).

At 1–47 (MGEFKVDKFNIEDFFSGDLDIFNYSSGMPSILPDAVPCHSENLEINS) the chain is on the extracellular side. A glycan (N-linked (GlcNAc...) asparagine) is linked at Asn23. A helical membrane pass occupies residues 48-74 (YAVVVIYVLVTLLSLVGNSLVMLVILY). At 75–83 (NRSTCSVTD) the chain is on the cytoplasmic side. A helical membrane pass occupies residues 84-104 (VYLLNLAIADLFFALTLPVWA). At 105–119 (ASKVNGWTFGSTLCK) the chain is on the extracellular side. An intrachain disulfide couples Cys118 to Cys195. Residues 120-141 (IFSYVKEVTFYSSVLLLACISM) traverse the membrane as a helical segment. The Cytoplasmic segment spans residues 142 to 162 (DRYLAIVHATSTLIQKRHLVK). A helical transmembrane segment spans residues 163–182 (FVCIAMWLLSVILALPILIL). The Extracellular segment spans residues 183–207 (RNPVKVNLSTLVCYEDVGNNTSRLR). Residues 208–230 (VVLRILPQTFGFLVPLLIMLFCY) form a helical membrane-spanning segment. The Cytoplasmic segment spans residues 231 to 250 (GFTLRTLFKAHMGQKHRAMR). The chain crosses the membrane as a helical span at residues 251-272 (VIFAVVLVFLLCWLPYNLVLFT). Over 273–293 (DTLMRTKLIKETCERRDDIDK) the chain is Extracellular. A helical membrane pass occupies residues 294–314 (ALNATEILGFLHSCLNPIIYA). Over 315–359 (FIGQKFRHGLLKIMATYGLVSKEFLAKEGRPSFVSSSSANTSTTL) the chain is Cytoplasmic.

Belongs to the G-protein coupled receptor 1 family. Interacts with IL8. Interacts with GNAI2. Post-translationally, phosphorylated upon ligand binding; which is required for desensitization.

The protein localises to the cell membrane. In terms of biological role, receptor for interleukin-8 which is a powerful neutrophil chemotactic factor. Binding of IL-8 to the receptor causes activation of neutrophils. This response is mediated via a G-protein that activates a phosphatidylinositol-calcium second messenger system. Binds to IL-8 with high affinity. Also binds with high affinity to CXCL3, GRO/MGSA and NAP-2. The chain is C-X-C chemokine receptor type 2 (Cxcr2) from Mus musculus (Mouse).